The following is a 449-amino-acid chain: Capsid protein (449 aa).

Positions 1–43 (MARRARRPRGRFYAFRRGRWHHLKRLRRRYKFRHRRRQRYRRR) are DNA-binding. The nuclear localization signals stretch occupies residues 6 to 47 (RRPRGRFYAFRRGRWHHLKRLRRRYKFRHRRRQRYRRRAFRK).

It belongs to the gyrovirus capsid protein family. As to quaternary structure, homomultimer (Potential). Interacts with Rep; this interaction relocates Rep into the nucleus.

The protein localises to the host nucleus. It is found in the virion. Self-assembles to form the virion icosahedral capsid with a T=1 symmetry. This very small capsid (25 nm in diameter) allows the virus to be very stable in the environment and resistant to some disinfectants, including detergents. Essential for the initial attachment to host receptors. After attachment, the virus is endocytosed and traffics to the nucleus. The capsid protein binds and transports the viral genome and Rep across the nuclear envelope. The polypeptide is Capsid protein (VP1) (Gallus gallus (Chicken)).